The primary structure comprises 284 residues: Shikimate dehydrogenase (NADP(+)) (284 aa).

Shikimate contacts are provided by residues 20–22 (SIS) and Ser-67. The active-site Proton acceptor is Lys-71. Asp-83 is a binding site for NADP(+). Shikimate is bound by residues Asn-92 and Asp-107. NADP(+) is bound by residues 129–133 (GAGGA) and Ile-227. Tyr-229 contributes to the shikimate binding site. Residue Gly-250 coordinates NADP(+).

It belongs to the shikimate dehydrogenase family. As to quaternary structure, homodimer.

It catalyses the reaction shikimate + NADP(+) = 3-dehydroshikimate + NADPH + H(+). It participates in metabolic intermediate biosynthesis; chorismate biosynthesis; chorismate from D-erythrose 4-phosphate and phosphoenolpyruvate: step 4/7. In terms of biological role, involved in the biosynthesis of the chorismate, which leads to the biosynthesis of aromatic amino acids. Catalyzes the reversible NADPH linked reduction of 3-dehydroshikimate (DHSA) to yield shikimate (SA). This Streptococcus pneumoniae (strain Taiwan19F-14) protein is Shikimate dehydrogenase (NADP(+)).